We begin with the raw amino-acid sequence, 197 residues long: Recombination protein RecR (197 aa).

A C4-type zinc finger spans residues 57–72; it reads CSICFAITEDDPCAIC. In terms of domain architecture, Toprim spans 79–174; sequence GTICVVENSQ…RISRLAHGIP (96 aa).

Belongs to the RecR family.

In terms of biological role, may play a role in DNA repair. It seems to be involved in an RecBC-independent recombinational process of DNA repair. It may act with RecF and RecO. The polypeptide is Recombination protein RecR (Pelobacter propionicus (strain DSM 2379 / NBRC 103807 / OttBd1)).